Reading from the N-terminus, the 353-residue chain is Rhodopsin (353 aa).

The Extracellular portion of the chain corresponds to 1–36; sequence MNGTEGPYFYIPMVNTTGIVRSPYEYPQYYLVNPAA. 2 N-linked (GlcNAc...) asparagine glycosylation sites follow: N2 and N15. The chain crosses the membrane as a helical span at residues 37 to 61; sequence YAALGAYMFLLILLGFPINFLTLYV. The Cytoplasmic portion of the chain corresponds to 62–73; it reads TIEHKKLRTPLN. The helical transmembrane segment at 74–96 threads the bilayer; it reads YILLNLAVANLFMVFGGFTTTMY. Topologically, residues 97-110 are extracellular; that stretch reads TSMHGYFVLGRLGC. A disulfide bridge connects residues C110 and C187. A helical membrane pass occupies residues 111–133; sequence NLEGFFATLGGEIALWSLVVLAV. The 'Ionic lock' involved in activated form stabilization motif lies at 134–136; the sequence is ERW. The Cytoplasmic portion of the chain corresponds to 134–152; sequence ERWMVVCKPISNFRFGENH. Residues 153 to 173 form a helical membrane-spanning segment; sequence AIMGLAFTWVMASACAVPPLV. Residues 174 to 202 are Extracellular-facing; sequence GWSRYIPEGMQCSCGIDYYTRAEGFNNES. N200 carries N-linked (GlcNAc...) asparagine glycosylation. A helical membrane pass occupies residues 203 to 224; the sequence is FVIYMFVCHFLIPLVVVFFCYG. The Cytoplasmic portion of the chain corresponds to 225-252; sequence RLLCAVKEAAAAQQESETTQRAEREVSR. The chain crosses the membrane as a helical span at residues 253-274; sequence MVVIMVVAFLICWCPYAGVAWY. The Extracellular portion of the chain corresponds to 275 to 286; it reads IFTHQGSEFGPL. The chain crosses the membrane as a helical span at residues 287–308; it reads FMTFPAFFAKSSSIYNPMIYIC. Position 296 is an N6-(retinylidene)lysine (K296). Over 309–353 the chain is Cytoplasmic; sequence MNKQFRHCMITTLCCGKNPFEEEEGASTTSKTEASSVSSSSVSPA. 2 S-palmitoyl cysteine lipidation sites follow: C322 and C323. The tract at residues 330–353 is disordered; the sequence is EEEGASTTSKTEASSVSSSSVSPA. Over residues 334–353 the composition is skewed to low complexity; sequence ASTTSKTEASSVSSSSVSPA.

The protein belongs to the G-protein coupled receptor 1 family. Opsin subfamily. Phosphorylated on some or all of the serine and threonine residues present in the C-terminal region. Post-translationally, contains one covalently linked retinal chromophore.

The protein localises to the membrane. It localises to the cell projection. The protein resides in the cilium. Its subcellular location is the photoreceptor outer segment. Its function is as follows. Photoreceptor required for image-forming vision at low light intensity. While most salt water fish species use retinal as chromophore, most freshwater fish use 3-dehydroretinal, or a mixture of retinal and 3-dehydroretinal. Light-induced isomerization of 11-cis to all-trans retinal triggers a conformational change that activates signaling via G-proteins. Subsequent receptor phosphorylation mediates displacement of the bound G-protein alpha subunit by arrestin and terminates signaling. In Mugil cephalus (Flathead mullet), this protein is Rhodopsin (rho).